The sequence spans 376 residues: Respiration factor 1 (376 aa).

Disordered regions lie at residues 1–23 (MKDL…DNRG), 88–107 (VNVT…NSTK), 258–279 (FKEK…TGSS), and 347–376 (GVNE…QHTN). Low complexity predominate over residues 354-376 (NSSNLNNSNSGTPHNHNQNQHTN).

Its subcellular location is the cytoplasm. It is found in the nucleus. The protein localises to the mitochondrion. Its function is as follows. Mitochondrial and nuclear transcriptional activator required for respiratory growth. This is Respiration factor 1 (RSF1) from Saccharomyces cerevisiae (strain YJM789) (Baker's yeast).